Here is a 511-residue protein sequence, read N- to C-terminus: Maturase K (511 aa).

Belongs to the intron maturase 2 family. MatK subfamily.

It localises to the plastid. Its subcellular location is the chloroplast. Functionally, usually encoded in the trnK tRNA gene intron. Probably assists in splicing its own and other chloroplast group II introns. This chain is Maturase K, found in Diplacus aurantiacus (Orange bush monkey flower).